Consider the following 349-residue polypeptide: DNA-directed RNA polymerase subunit alpha (349 aa).

An alpha N-terminal domain (alpha-NTD) region spans residues 1-226; sequence MLIAQRPTLV…GLFGLAQELN (226 aa). The alpha C-terminal domain (alpha-CTD) stretch occupies residues 241–349; the sequence is AALAADLALP…GAEFVETEQY (109 aa). The segment at 308–349 is disordered; the sequence is LKDSPPGFDPRQAVDTYGTDSYNPAFSDPSDDGAEFVETEQY. The span at 336–349 shows a compositional bias: acidic residues; it reads PSDDGAEFVETEQY.

This sequence belongs to the RNA polymerase alpha chain family. In terms of assembly, homodimer. The RNAP catalytic core consists of 2 alpha, 1 beta, 1 beta' and 1 omega subunit. When a sigma factor is associated with the core the holoenzyme is formed, which can initiate transcription.

The enzyme catalyses RNA(n) + a ribonucleoside 5'-triphosphate = RNA(n+1) + diphosphate. Its function is as follows. DNA-dependent RNA polymerase catalyzes the transcription of DNA into RNA using the four ribonucleoside triphosphates as substrates. This is DNA-directed RNA polymerase subunit alpha from Frankia alni (strain DSM 45986 / CECT 9034 / ACN14a).